The chain runs to 104 residues: MAAKIRRQDEVIVLAGKDQGKRGKVSQVLPTGKLIVEGINLVKKHQKPNPQLGVAGGIVEQEAPIQASNVAIFNSATGKADRVGFRFEDGKKVRFFKSNSELVK.

This sequence belongs to the universal ribosomal protein uL24 family. In terms of assembly, part of the 50S ribosomal subunit.

Its function is as follows. One of two assembly initiator proteins, it binds directly to the 5'-end of the 23S rRNA, where it nucleates assembly of the 50S subunit. Functionally, one of the proteins that surrounds the polypeptide exit tunnel on the outside of the subunit. In Shewanella pealeana (strain ATCC 700345 / ANG-SQ1), this protein is Large ribosomal subunit protein uL24.